Reading from the N-terminus, the 359-residue chain is DNA polymerase IV (359 aa).

The UmuC domain maps to 6 to 186 (IIHVDMDAFY…LPIEAFWGVG (181 aa)). The Mg(2+) site is built by aspartate 10 and aspartate 104. Glutamate 105 is a catalytic residue.

Belongs to the DNA polymerase type-Y family. Monomer. Requires Mg(2+) as cofactor.

The protein resides in the cytoplasm. It catalyses the reaction DNA(n) + a 2'-deoxyribonucleoside 5'-triphosphate = DNA(n+1) + diphosphate. In terms of biological role, poorly processive, error-prone DNA polymerase involved in untargeted mutagenesis. Copies undamaged DNA at stalled replication forks, which arise in vivo from mismatched or misaligned primer ends. These misaligned primers can be extended by PolIV. Exhibits no 3'-5' exonuclease (proofreading) activity. May be involved in translesional synthesis, in conjunction with the beta clamp from PolIII. In Akkermansia muciniphila (strain ATCC BAA-835 / DSM 22959 / JCM 33894 / BCRC 81048 / CCUG 64013 / CIP 107961 / Muc), this protein is DNA polymerase IV.